Consider the following 312-residue polypeptide: L-lactate dehydrogenase (312 aa).

Residues V14, D35, and Y66 each coordinate NAD(+). Q83 and R90 together coordinate substrate. Residues S103, 120–122 (ASN), and S145 contribute to the NAD(+) site. 122–125 (NPVD) is a binding site for substrate. 150–153 (DSAR) is a substrate binding site. Residue H177 is the Proton acceptor of the active site. Position 220 is a phosphotyrosine (Y220). Residue T229 participates in substrate binding.

Belongs to the LDH/MDH superfamily. LDH family. Homotetramer.

It localises to the cytoplasm. It carries out the reaction (S)-lactate + NAD(+) = pyruvate + NADH + H(+). It functions in the pathway fermentation; pyruvate fermentation to lactate; (S)-lactate from pyruvate: step 1/1. Functionally, catalyzes the conversion of lactate to pyruvate. In Mycoplasma genitalium (strain ATCC 33530 / DSM 19775 / NCTC 10195 / G37) (Mycoplasmoides genitalium), this protein is L-lactate dehydrogenase.